The following is a 434-amino-acid chain: Probable exopolygalacturonase X (434 aa).

Positions 1-23 (MKFLHTVAQTATLLLSLGASVEG) are cleaved as a signal peptide. Positions 35 to 54 (HHPFRPLPASTPRTKTCHVR) are disordered. N-linked (GlcNAc...) asparagine glycosylation is found at asparagine 113, asparagine 129, and asparagine 199. One copy of the PbH1 1 repeat lies at 231-252 (SSNIVIQNSVVNNGDDCVSFKP). The Proton donor role is filled by aspartate 245. Cysteines 247 and 264 form a disulfide. 2 N-linked (GlcNAc...) asparagine glycosylation sites follow: asparagine 253 and asparagine 265. One copy of the PbH1 2 repeat lies at 254 to 274 (STDILVQNMHCNGSHGISVGS). Histidine 268 is a catalytic residue. N-linked (GlcNAc...) asparagine glycans are attached at residues asparagine 292, asparagine 297, asparagine 329, asparagine 354, and asparagine 364. The PbH1 3 repeat unit spans residues 327-348 (VSNITYDRMYIENVDWAIEVTQ). Residues 362–394 (PSNLTISDVHIKNMWGTTSGKRDPNVGTIVCSS) form a PbH1 4 repeat. Cysteine 392 and cysteine 398 form a disulfide bridge. N-linked (GlcNAc...) asparagine glycosylation is found at asparagine 407 and asparagine 430.

It belongs to the glycosyl hydrolase 28 family.

It localises to the secreted. It carries out the reaction [(1-&gt;4)-alpha-D-galacturonosyl](n) + H2O = alpha-D-galacturonate + [(1-&gt;4)-alpha-D-galacturonosyl](n-1). Its function is as follows. Specific in hydrolyzing the terminal glycosidic bond of polygalacturonic acid and oligogalacturonates. The sequence is that of Probable exopolygalacturonase X (pgaX) from Aspergillus terreus (strain NIH 2624 / FGSC A1156).